A 578-amino-acid polypeptide reads, in one-letter code: ATP-dependent RNA helicase dbp3 (578 aa).

Positions 59 to 69 are enriched in basic and acidic residues; sequence KRSADEEASVK. Residues 59-117 form a disordered region; it reads KRSADEEASVKRKEKKSKHEHKKHKKDKPSADKDRISKKDKKKSKKGKSKTKEESIEIN. Basic residues predominate over residues 70–85; sequence RKEKKSKHEHKKHKKD. Residues 86 to 95 show a composition bias toward basic and acidic residues; the sequence is KPSADKDRIS. A compositionally biased stretch (basic residues) spans 96–107; sequence KKDKKKSKKGKS. A Q motif motif is present at residues 167–193; it reads LQFDELDVSAKLREGLKNYKEPTPIQA. The 178-residue stretch at 196–373 folds into the Helicase ATP-binding domain; sequence WPYLLAGRDV…ATFLKDPVKI (178 aa). Position 209–216 (209–216) interacts with ATP; the sequence is AETGSGKT. A DEAD box motif is present at residues 316–319; the sequence is DEAD. Residues 402–550 form the Helicase C-terminal domain; that stretch reads MLDNLLRKHL…DIPEGLFKFG (149 aa).

Belongs to the DEAD box helicase family. DDX5/DBP2 subfamily.

Its subcellular location is the nucleus. It localises to the nucleolus. The catalysed reaction is ATP + H2O = ADP + phosphate + H(+). ATP-dependent RNA helicase required for 60S ribosomal subunit synthesis. Involved in efficient pre-rRNA processing, predominantly at site A3, which is necessary for the normal formation of 25S and 5.8S rRNAs. This chain is ATP-dependent RNA helicase dbp3 (dbp3), found in Schizosaccharomyces pombe (strain 972 / ATCC 24843) (Fission yeast).